A 380-amino-acid polypeptide reads, in one-letter code: Proline iminopeptidase (380 aa).

The region spanning 98–360 (PVVFLHGGPG…IVYDAGHSAN (263 aa)) is the AB hydrolase-1 domain. Serine 172 functions as the Nucleophile in the catalytic mechanism. Aspartate 329 is an active-site residue. The Proton donor role is filled by histidine 357.

It belongs to the peptidase S33 family.

It is found in the cytoplasm. The enzyme catalyses Release of N-terminal proline from a peptide.. Its function is as follows. Specifically catalyzes the removal of N-terminal proline residues from peptides. The sequence is that of Proline iminopeptidase (PIP) from Arabidopsis thaliana (Mouse-ear cress).